Reading from the N-terminus, the 235-residue chain is Tetraspanin-8 (235 aa).

Residues 1-12 (MAGVSSCLKYSM) are Cytoplasmic-facing. The helical transmembrane segment at 13–33 (FFFNFLFWVCGTLILGLAIWV) threads the bilayer. At 34-52 (RVSKDGKEIITSGDSSTNP) the chain is on the extracellular side. The chain crosses the membrane as a helical span at residues 53–73 (FIAVNILIAVGSIIMVLGFLG). The Cytoplasmic portion of the chain corresponds to 74–84 (CCGAVKESRCM). A helical transmembrane segment spans residues 85–105 (LLLFFIGLLLILILQVAAGIL). At 106 to 203 (GAAFKPEYNR…SLIKDLFEKN (98 aa)) the chain is on the extracellular side. Asparagine 118 is a glycosylation site (N-linked (GlcNAc...) asparagine). The chain crosses the membrane as a helical span at residues 204–224 (IIIVIGIAFGLAVIEILGLVF). Over 225-235 (SMVLYCQIGSK) the chain is Cytoplasmic.

It belongs to the tetraspanin (TM4SF) family. As to quaternary structure, forms homooligomers. Interacts with MEP1B. Interacts with integrin alpha3/ITGA3. Interacts with RICTOR and MTOR. Interacts with ADAM17. Interacts with ECE1.

It is found in the cell membrane. Its function is as follows. Structural component of specialized membrane microdomains known as tetraspanin-enriched microdomains (TERMs), which act as platforms for receptor clustering and signaling. Participates thereby in diverse biological functions such as cell signal transduction, migration and protein trafficking. Promotes ADAM17-mediated TNF-alpha processing through recruitment of ADAM17 to tetraspanin-enriched micro-domains (TEMs). Forms a complex with RICTOR and integrin alpha3/ITGA3 to mediate mTORC2 activation and AKT1 phosphorylation leading to cell migration. Reduces apoptosis and autophagy induced by high glucose levels through forming a complex with mTOR and RICTOR. Contributes to the maintenance of intestinal epithelial barrier and plays a role in the regulation of intestine inflammation by switching interferon gamma receptor 1/IFNGR1 from clathrin-dependent to lipid raft-dependent endocytosis route to limit STAT1 activation magnitude and duration. Acts as a modulator of the endothelin axis by associating with endothelin converting enzyme ECE1 and regulating its activity of conversion of the endothelin-1 precursor to endothelin. This chain is Tetraspanin-8 (Tspan8), found in Mus musculus (Mouse).